The following is a 74-amino-acid chain: Probable tetrachloroethene reductive dehalogenase membrane anchor protein (74 aa).

2 consecutive transmembrane segments (helical) span residues 11-31 (ALGL…ISMG) and 40-60 (AGSI…FLLM).

Belongs to the PceB family.

It localises to the cell inner membrane. Functionally, may act as a membrane anchor for the tetrachloroethene reductive dehalogenase PceA. The protein is Probable tetrachloroethene reductive dehalogenase membrane anchor protein of Sulfurospirillum multivorans (Dehalospirillum multivorans).